The sequence spans 434 residues: Protein FAM83A (434 aa).

The tract at residues M1–G298 is DUF1669. The tract at residues R76–S97 is disordered. S301, S327, S348, and S357 each carry phosphoserine. The disordered stretch occupies residues V308–S399. Low complexity-rich tracts occupy residues S320–S332 and S348–S357. Residues P358 to F369 are compositionally biased toward pro residues.

It belongs to the FAM83 family. Directly interacts (via DUF1669) with casein kinase isoforms CSNK1A1, CSNK1A1L, CSNK1D and CSNK1E. Phosphorylated upon EGFR activation in a breast cancer cell line.

The protein resides in the cytoplasm. Functionally, involved in mitochondrial maintenance during adipogenesis. May be acting by playing a role in the maintenance of normal mitochondrial function. The polypeptide is Protein FAM83A (Homo sapiens (Human)).